The sequence spans 275 residues: Diaminopimelate epimerase (275 aa).

The substrate site is built by Asn20 and Asn63. The active-site Proton donor is the Cys72. Substrate-binding positions include 73–74 (GN), Asn179, and 197–198 (ER). The Proton acceptor role is filled by Cys207. 208–209 (GT) serves as a coordination point for substrate.

The protein belongs to the diaminopimelate epimerase family. Homodimer.

The protein resides in the cytoplasm. It carries out the reaction (2S,6S)-2,6-diaminopimelate = meso-2,6-diaminopimelate. The protein operates within amino-acid biosynthesis; L-lysine biosynthesis via DAP pathway; DL-2,6-diaminopimelate from LL-2,6-diaminopimelate: step 1/1. Its function is as follows. Catalyzes the stereoinversion of LL-2,6-diaminopimelate (L,L-DAP) to meso-diaminopimelate (meso-DAP), a precursor of L-lysine and an essential component of the bacterial peptidoglycan. This Chlamydia trachomatis serovar L2 (strain ATCC VR-902B / DSM 19102 / 434/Bu) protein is Diaminopimelate epimerase.